The following is a 178-amino-acid chain: Mediator of RNA polymerase II transcription subunit 28 (178 aa).

The tract at residues M1–G25 is disordered. The stretch at Q109–D145 forms a coiled coil.

It belongs to the Mediator complex subunit 28 family. In terms of assembly, component of the Mediator complex, which is composed of MED1, MED4, MED6, MED7, MED8, MED9, MED10, MED11, MED12, MED13, MED13L, MED14, MED15, MED16, MED17, MED18, MED19, MED20, MED21, MED22, MED23, MED24, MED25, MED26, MED27, MED29, MED30, MED31, CCNC, CDK8 and CDC2L6/CDK11. The MED12, MED13, CCNC and CDK8 subunits form a distinct module termed the CDK8 module. Mediator containing the CDK8 module is less active than Mediator lacking this module in supporting transcriptional activation. Individual preparations of the Mediator complex lacking one or more distinct subunits have been variously termed ARC, CRSP, DRIP, PC2, SMCC and TRAP. Forms a ternary complex with NF2/merlin and GRB2. Binds to actin.

The protein resides in the nucleus. It localises to the cytoplasm. The protein localises to the membrane. Component of the Mediator complex, a coactivator involved in the regulated transcription of nearly all RNA polymerase II-dependent genes. Mediator functions as a bridge to convey information from gene-specific regulatory proteins to the basal RNA polymerase II transcription machinery. Mediator is recruited to promoters by direct interactions with regulatory proteins and serves as a scaffold for the assembly of a functional preinitiation complex with RNA polymerase II and the general transcription factors. May be part of a complex containing NF2/merlin that participates in cellular signaling to the actin cytoskeleton downstream of tyrosine kinase signaling pathways. This chain is Mediator of RNA polymerase II transcription subunit 28 (MED28), found in Bos taurus (Bovine).